The sequence spans 248 residues: Cobalt-precorrin-6A reductase (248 aa).

Belongs to the precorrin-6x reductase family.

The enzyme catalyses Co-precorrin-6B + NAD(+) = Co-precorrin-6A + NADH + H(+). The protein operates within cofactor biosynthesis; adenosylcobalamin biosynthesis; cob(II)yrinate a,c-diamide from sirohydrochlorin (anaerobic route): step 7/10. In terms of biological role, catalyzes the reduction of the macrocycle of cobalt-precorrin-6A to cobalt-precorrin-6B. The sequence is that of Cobalt-precorrin-6A reductase (cbiJ) from Methanococcus maripaludis (Methanococcus deltae).